The primary structure comprises 281 residues: Probable endonuclease 4 (281 aa).

Zn(2+) contacts are provided by H68, H108, E145, D179, H182, H216, D229, H231, and E261.

Belongs to the AP endonuclease 2 family. It depends on Zn(2+) as a cofactor.

It carries out the reaction Endonucleolytic cleavage to 5'-phosphooligonucleotide end-products.. Endonuclease IV plays a role in DNA repair. It cleaves phosphodiester bonds at apurinic or apyrimidinic (AP) sites, generating a 3'-hydroxyl group and a 5'-terminal sugar phosphate. The protein is Probable endonuclease 4 of Trichlorobacter lovleyi (strain ATCC BAA-1151 / DSM 17278 / SZ) (Geobacter lovleyi).